A 429-amino-acid polypeptide reads, in one-letter code: Adenosylhomocysteinase (429 aa).

Positions 64, 136, and 161 each coordinate substrate. 162 to 164 (TTT) provides a ligand contact to NAD(+). Residues lysine 191 and aspartate 195 each coordinate substrate. Residues asparagine 196, 225–230 (GYGWCG), glutamate 248, asparagine 283, 304–306 (SGH), and asparagine 351 contribute to the NAD(+) site.

This sequence belongs to the adenosylhomocysteinase family. It depends on NAD(+) as a cofactor.

The protein localises to the cytoplasm. It carries out the reaction S-adenosyl-L-homocysteine + H2O = L-homocysteine + adenosine. It functions in the pathway amino-acid biosynthesis; L-homocysteine biosynthesis; L-homocysteine from S-adenosyl-L-homocysteine: step 1/1. Functionally, may play a key role in the regulation of the intracellular concentration of adenosylhomocysteine. The chain is Adenosylhomocysteinase from Gloeothece citriformis (strain PCC 7424) (Cyanothece sp. (strain PCC 7424)).